Reading from the N-terminus, the 244-residue chain is Type III pantothenate kinase (244 aa).

8–15 (DQGNSACK) is an ATP binding site. Substrate is bound by residues tyrosine 88 and 94 to 97 (GADR). Residue aspartate 96 is the Proton acceptor of the active site. Position 117 (aspartate 117) interacts with K(+). Threonine 120 lines the ATP pocket. Threonine 175 is a substrate binding site.

Belongs to the type III pantothenate kinase family. Homodimer. NH4(+) serves as cofactor. The cofactor is K(+).

It is found in the cytoplasm. It catalyses the reaction (R)-pantothenate + ATP = (R)-4'-phosphopantothenate + ADP + H(+). Its pathway is cofactor biosynthesis; coenzyme A biosynthesis; CoA from (R)-pantothenate: step 1/5. Its function is as follows. Catalyzes the phosphorylation of pantothenate (Pan), the first step in CoA biosynthesis. The sequence is that of Type III pantothenate kinase from Porphyromonas gingivalis (strain ATCC BAA-308 / W83).